A 451-amino-acid polypeptide reads, in one-letter code: Enolase (451 aa).

Gln-163 serves as a coordination point for (2R)-2-phosphoglycerate. Catalysis depends on Glu-205, which acts as the Proton donor. Mg(2+) contacts are provided by Asp-258, Glu-308, and Asp-335. Lys-360, Arg-389, Ser-390, and Lys-411 together coordinate (2R)-2-phosphoglycerate. The Proton acceptor role is filled by Lys-360.

It belongs to the enolase family. The cofactor is Mg(2+).

It is found in the cytoplasm. It localises to the secreted. The protein localises to the cell surface. It catalyses the reaction (2R)-2-phosphoglycerate = phosphoenolpyruvate + H2O. It functions in the pathway carbohydrate degradation; glycolysis; pyruvate from D-glyceraldehyde 3-phosphate: step 4/5. Catalyzes the reversible conversion of 2-phosphoglycerate (2-PG) into phosphoenolpyruvate (PEP). It is essential for the degradation of carbohydrates via glycolysis. The sequence is that of Enolase from Mycoplasma capricolum subsp. capricolum (strain California kid / ATCC 27343 / NCTC 10154).